Here is a 255-residue protein sequence, read N- to C-terminus: Acetylglutamate kinase (255 aa).

Substrate is bound by residues 40–41 (GG), arginine 62, and asparagine 153.

The protein belongs to the acetylglutamate kinase family. ArgB subfamily.

Its subcellular location is the cytoplasm. The enzyme catalyses N-acetyl-L-glutamate + ATP = N-acetyl-L-glutamyl 5-phosphate + ADP. The protein operates within amino-acid biosynthesis; L-arginine biosynthesis; N(2)-acetyl-L-ornithine from L-glutamate: step 2/4. Functionally, catalyzes the ATP-dependent phosphorylation of N-acetyl-L-glutamate. The sequence is that of Acetylglutamate kinase from Bacillus cereus (strain 03BB102).